Reading from the N-terminus, the 637-residue chain is MTTYFKLVKGATKIKSAPPKQKYLDPILLGTSNEEDFYEIVKGLDSRINDTAWTIVYKSLLVVHLMIREGSKDVALRYYSRNLEFFDIENIRGSNGSASGDMRALDRYDNYLKVRCREFGKIKKDYVRDGYRTLKLNSGNYGSSRNKQHSINIALDHVESLEVQIQALIKNKYTQYDLSNELIIFGFKLLIQDLLALYNALNEGIITLLESFFELSHHNAERTLDLYKTFVDLTEHVVRYLKSGKTAGLKIPVIKHITTKLVRSLEEHLIEDDKTHNTFVPVDSSQGSAGAVVAKSTAQERLEQIREQKRILEAQLKNEQVAISPALTTVTAAQSYNPFGTDSSMHTNIPMAVANQTQQIANNPFVSQTQPQVMNTPTAHTEPANLNVPEYAAVQHTVNFNPVQDAGVSAQQTGYYSINNHLTPTFTGAGFGGYSVSQDTTAASNQQVSHSQTGSNNPFALHNAATIATGNPAHENVLNNPFSRPNFDEQNTNMPLQQQIISNPFQNQTYNQQQFQQQKMPLSSINSVMTTPTSMQGSMNIPQRFDKMEFQAHYTQNHLQQQQQQQQQQQQQQQQQPQQGYYVPATAGANPVTNITGTVQPQNFPFYPQQQPQPEQSQTQQPVLGNQYANNLNLIDM.

Positions 1-126 (MTTYFKLVKG…REFGKIKKDY (126 aa)) constitute an ENTH domain. Positions 555–637 (TQNHLQQQQQ…YANNLNLIDM (83 aa)) are disordered. 2 stretches are compositionally biased toward low complexity: residues 560–579 (QQQQ…QPQQ) and 600–622 (QPQN…TQQP). A clathrin-binding region spans residues 587–637 (AGANPVTNITGTVQPQNFPFYPQQQPQPEQSQTQQPVLGNQYANNLNLIDM). Polar residues predominate over residues 623–637 (VLGNQYANNLNLIDM).

This sequence belongs to the AP180 family. In terms of assembly, interacts with PAN1 and the clathrin heavy and light chains CHC1 and CLC1.

The protein resides in the bud. It is found in the bud neck. The protein localises to the cell membrane. It localises to the cytoplasm. In terms of biological role, involved in endocytosis and clathrin cage assembly. This is Clathrin coat assembly protein AP180A (YAP1801) from Saccharomyces cerevisiae (strain ATCC 204508 / S288c) (Baker's yeast).